The sequence spans 343 residues: MAASGKLSTWRLPPLPTIREIIKLLRVQAAKQLSQNFLLDLRLTDKIVRKAGNLTNAYVYEVGPGPGGITRSILNADVAELLVVEKDTRFVPGLQMLSDAAPGKLRIVHGDVLTFKVEKAFSESLKRPWEDDPPDVHIIGNLPFSVSTPLIIKWLENISCRDGPFVYGRTQMTLTFQKEVAERLAANTGSKQRSRLSVMAQYLCNVRHIFTIPGRAFVPKPEVDVGVVHFTPLIQPKIEQPFKLVEKVVQNVFQFRRKYCHRGLRMLFPEAQRLESTGRLLELADVDPTLRPCQPSISHFKSLCDVYRKMCDEDPQLFAYNFREELKQRKSKNEEKEEDDAEN.

Residues 1–27 constitute a mitochondrion transit peptide; sequence MAASGKLSTWRLPPLPTIREIIKLLRV. Residues Leu-38, Gly-63, Glu-85, Lys-86, Asp-111, Val-112, and Asn-141 each contribute to the S-adenosyl-L-methionine site.

It belongs to the class I-like SAM-binding methyltransferase superfamily. rRNA adenine N(6)-methyltransferase family. KsgA subfamily. Interacts with mitochondrial RNA polymerase POLRMT. Interacts with TFAM. Bound to the maturing mtSSU until the late stages of assembly.

It is found in the mitochondrion. The catalysed reaction is adenosine(N)/adenosine(N+1) in rRNA + 4 S-adenosyl-L-methionine = N(6)-dimethyladenosine(N)/N(6)-dimethyladenosine(N+1) in rRNA + 4 S-adenosyl-L-homocysteine + 4 H(+). S-adenosyl-L-methionine-dependent methyltransferase which specifically dimethylates mitochondrial 12S rRNA at the conserved stem loop. Also required for basal transcription of mitochondrial DNA, probably via its interaction with POLRMT and TFAM. Stimulates transcription independently of the methyltransferase activity. Its function is as follows. Mitochondrial methyltransferase which uses S-adenosyl methionine to dimethylate two highly conserved adjacent adenosine residues (A1583 and A1584) within the loop of helix 45 at the 3-prime end of 12S rRNA, thereby regulating the assembly or stability of the small subunit of the mitochondrial ribosome. Also required for basal transcription of mitochondrial DNA, probably via its interaction with POLRMT and TFAM. Stimulates transcription independently of the methyltransferase activity. The sequence is that of Dimethyladenosine transferase 1, mitochondrial (TFB1M) from Pongo abelii (Sumatran orangutan).